We begin with the raw amino-acid sequence, 230 residues long: Thiamine-triphosphatase (230 aa).

Ala-2 is subject to N-acetylalanine. Positions 5 to 201 (LIEVERKFLP…AKLIVYLQRF (197 aa)) constitute a CYTH domain. Mg(2+)-binding residues include Glu-7 and Glu-9. 5 residues coordinate substrate: Lys-11, Arg-55, Arg-57, Lys-65, and Arg-125. Mg(2+) contacts are provided by Asp-145, Glu-157, and Glu-159. Glu-157 contributes to the substrate binding site. Lys-193 serves as a coordination point for substrate.

It belongs to the ThTPase family. As to quaternary structure, monomer. The cofactor is Mg(2+).

It is found in the cytoplasm. The enzyme catalyses thiamine triphosphate + H2O = thiamine diphosphate + phosphate + H(+). Its function is as follows. Hydrolase highly specific for thiamine triphosphate (ThTP). This chain is Thiamine-triphosphatase (THTPA), found in Macaca fascicularis (Crab-eating macaque).